The sequence spans 128 residues: NADH-quinone oxidoreductase subunit A (128 aa).

Helical transmembrane passes span 9–29 (FPIAVALLVAVGLAAVMLALA), 68–88 (LLFIVFDIEAIFLYPWAVLLL), and 96–116 (LGWAGYISMGIFVATLVAGLV).

Belongs to the complex I subunit 3 family. As to quaternary structure, NDH-1 is composed of 14 different subunits. Subunits NuoA, H, J, K, L, M, N constitute the membrane sector of the complex.

Its subcellular location is the cell inner membrane. It catalyses the reaction a quinone + NADH + 5 H(+)(in) = a quinol + NAD(+) + 4 H(+)(out). In terms of biological role, NDH-1 shuttles electrons from NADH, via FMN and iron-sulfur (Fe-S) centers, to quinones in the respiratory chain. The immediate electron acceptor for the enzyme in this species is believed to be ubiquinone. Couples the redox reaction to proton translocation (for every two electrons transferred, four hydrogen ions are translocated across the cytoplasmic membrane), and thus conserves the redox energy in a proton gradient. This Anaeromyxobacter sp. (strain Fw109-5) protein is NADH-quinone oxidoreductase subunit A.